A 460-amino-acid chain; its full sequence is Ribosome biogenesis protein YTM1 (460 aa).

Residues 8–89 (VKIRFFTREK…EASLNVEYTR (82 aa)) are ubiquitin-like (UBL) domain. The tract at residues 99 to 460 (SFSNEDWVSS…INKGDNIFKN (362 aa)) is sufficient for interaction with ERB1 and association with 66S pre-ribosomes. WD repeat units follow at residues 101 to 140 (SNEDWVSSLDVGDGSKHIISGSYDGIVRTWDLSGNVQKQY), 142 to 180 (GHSGPIRAVKYISNTRLVSAGNDRTLRLWKTKNDDLKLT), 206 to 244 (GHKAPVVSIDVSDNSRILSASYDNSIGFWSTIYKEMTVV), 285 to 325 (SHTA…CIDT), 327 to 366 (TTSYSLLSIAQLSTLNLLACGSSARHITLHDPRVGASSKV), 373 to 413 (GHKN…PMYT), and 424 to 460 (GVNDKVFAVKWAEKVGIISAGQDKKIQINKGDNIFKN).

This sequence belongs to the WD repeat WDR12/YTM1 family. As to quaternary structure, component of the NOP7 complex, composed of ERB1, NOP7 and YTM1. The complex is held together by ERB1, which interacts with NOP7 via its N-terminal domain and with YTM1 via a high-affinity interaction between the seven-bladed beta-propeller domains of the 2 proteins. The NOP7 complex associates with the 66S pre-ribosome. Interacts (via UBL domain) with MDN1 (via VWFA/MIDAS domain).

Its subcellular location is the nucleus. It is found in the nucleolus. It localises to the nucleoplasm. Functionally, component of the NOP7 complex, which is required for maturation of the 25S and 5.8S ribosomal RNAs and formation of the 60S ribosome. The chain is Ribosome biogenesis protein YTM1 from Saccharomyces cerevisiae (strain YJM789) (Baker's yeast).